We begin with the raw amino-acid sequence, 257 residues long: Staphylococcal secretory antigen SsaA (257 aa).

The N-terminal stretch at 1 to 26 is a signal peptide; that stretch reads MKKIATATIATAGIATFAFAHHDAQA. 8 consecutive repeat copies span residues 73-75, 76-78, 84-86, 87-89, 90-92, 93-95, 96-98, and 99-101. The segment at 73-101 is 8 X 3 AA repeats of Y-[NS]-N; sequence YNNYNNYNYYGYNNYSNYNNYSNYNNYNN. Positions 101 to 144 are disordered; that stretch reads NYQSNNTQSQRTTQPTGGLGASYSTSSSNVHVTTTSAPSSNGVS. The span at 107–116 shows a compositional bias: polar residues; it reads TQSQRTTQPT. The span at 122–136 shows a compositional bias: low complexity; sequence SYSTSSSNVHVTTTS. A Peptidase C51 domain is found at 136–257; sequence SAPSSNGVSL…SQAASYNYIH (122 aa).

It is found in the secreted. Not known; immunogenic protein expressed during sepsis and particularly during episodes of infective endocarditis. This Staphylococcus epidermidis protein is Staphylococcal secretory antigen SsaA (ssaA).